A 257-amino-acid chain; its full sequence is tRNA pseudouridine synthase A (257 aa).

The active-site Nucleophile is the Asp43. Tyr94 provides a ligand contact to substrate.

It belongs to the tRNA pseudouridine synthase TruA family.

It carries out the reaction uridine(38/39/40) in tRNA = pseudouridine(38/39/40) in tRNA. Its function is as follows. Formation of pseudouridine at positions 38, 39 and 40 in the anticodon stem and loop of transfer RNAs. This chain is tRNA pseudouridine synthase A, found in Pyrobaculum calidifontis (strain DSM 21063 / JCM 11548 / VA1).